The following is a 506-amino-acid chain: Sodium-coupled neutral amino acid symporter 2 (506 aa).

The segment at 1–23 is disordered; sequence MKKAEMGRFNISPDEDSSSYSSN. Over 1–76 the chain is Cytoplasmic; that stretch reads MKKAEMGRFN…HPGTTSFGMS (76 aa). Residues 1-96 are regulates protein turnover upon amino acid deprivation; that stretch reads MKKAEMGRFN…SGILGLSYAM (96 aa). 4 positions are modified to phosphoserine: serine 12, serine 21, serine 22, and serine 55. The helical transmembrane segment at 77-96 threads the bilayer; the sequence is VFNLSNAIVGSGILGLSYAM. Residue asparagine 82 participates in Na(+) binding. The Extracellular segment spans residues 97-102; it reads ANTGIA. A helical transmembrane segment spans residues 103 to 123; that stretch reads LFIILLTFVSIFSLYSVHLLL. Residues 124 to 158 lie on the Cytoplasmic side of the membrane; sequence KTANEGGSLLYEQLGHKAFGMVGKLTASGSITMQN. A helical membrane pass occupies residues 159 to 177; that stretch reads IGAMSSYLFIVKYELPLVI. Over 178-188 the chain is Extracellular; it reads QALMNIEDTNG. The chain crosses the membrane as a helical span at residues 189 to 209; sequence LWYLNGDYLVLLVSLVLILPL. At 210–217 the chain is on the cytoplasmic side; sequence SLLRNLGY. Residues 218-238 form a helical membrane-spanning segment; that stretch reads LGYTSGLSLLCMMFFLIVVIF. Over 239 to 292 the chain is Extracellular; the sequence is KKFQISCPAEIAFLVNETVNSSLTQPATFLPDMGFNRTESDSCQPRYFIFNSQT. An intrachain disulfide couples cysteine 245 to cysteine 281. Residues asparagine 258 and asparagine 274 are each glycosylated (N-linked (GlcNAc...) asparagine). A helical transmembrane segment spans residues 293-313; sequence VYAVPILTFSFVCHPAILPIY. Residues 314 to 329 lie on the Cytoplasmic side of the membrane; it reads EELKGRSRRRMMNVSK. The chain crosses the membrane as a helical span at residues 330–350; the sequence is ISFFAMFLMYLLAALFGYLTF. Residues 351–371 are Extracellular-facing; it reads YGHVESELLHTYSSVMETDIL. Residues 372–392 traverse the membrane as a helical segment; it reads LLIVRLAVLVAVTLTVPVVIF. Threonine 386 is a binding site for Na(+). Residues 393–413 are Cytoplasmic-facing; that stretch reads PIRSSITHLLCASKEFSWWRH. Residues 414-434 form a helical membrane-spanning segment; that stretch reads SVITVSILVFTNLLVIFVPNI. The Extracellular portion of the chain corresponds to 435–436; that stretch reads RD. Residues 437–457 traverse the membrane as a helical segment; that stretch reads IFGFIGASAAAMLIFILPSAF. Over 458–472 the chain is Cytoplasmic; sequence YIKLVKKEPMKSVQK. The chain crosses the membrane as a helical span at residues 473 to 495; that stretch reads IGAMFFLLSGIVVMTGSMALIVL. The Extracellular portion of the chain corresponds to 496–506; the sequence is DWVHNAPGGGH.

The protein belongs to the amino acid/polyamine transporter 2 family. In terms of processing, polyubiquitination by NEDD4L regulates the degradation and the activity of SLC38A2.

It localises to the cell membrane. It catalyses the reaction L-alanine(in) + Na(+)(in) = L-alanine(out) + Na(+)(out). The catalysed reaction is glycine(in) + Na(+)(in) = glycine(out) + Na(+)(out). It carries out the reaction L-serine(in) + Na(+)(in) = L-serine(out) + Na(+)(out). The enzyme catalyses L-proline(in) + Na(+)(in) = L-proline(out) + Na(+)(out). It catalyses the reaction L-methionine(in) + Na(+)(in) = L-methionine(out) + Na(+)(out). The catalysed reaction is L-histidine(in) + Na(+)(in) = L-histidine(out) + Na(+)(out). It carries out the reaction L-asparagine(in) + Na(+)(in) = L-asparagine(out) + Na(+)(out). The enzyme catalyses L-glutamine(in) + Na(+)(in) = L-glutamine(out) + Na(+)(out). It catalyses the reaction L-threonine(in) + Na(+)(in) = L-threonine(out) + Na(+)(out). The catalysed reaction is L-leucine(in) + Na(+)(in) = L-leucine(out) + Na(+)(out). It carries out the reaction L-phenylalanine(in) + Na(+)(in) = L-phenylalanine(out) + Na(+)(out). With respect to regulation, inhibited by N-methyl-D-glucamine. Inhibited by choline. Allosteric regulation of sodium ions binding by pH. In terms of biological role, symporter that cotransports neutral amino acids and sodium ions from the extracellular to the intracellular side of the cell membrane. The transport is pH-sensitive, Li(+)-intolerant, electrogenic, driven by the Na(+) electrochemical gradient and cotransports of neutral amino acids and sodium ions with a stoichiometry of 1:1. May function in the transport of amino acids at the blood-brain barrier. May function in the transport of amino acids in the supply of maternal nutrients to the fetus through the placenta. Maintains a key metabolic glutamine/glutamate balance underpinning retrograde signaling by dendritic release of the neurotransmitter glutamate. Transports L-proline in differentiating osteoblasts for the efficient synthesis of proline-enriched proteins and provides proline essential for osteoblast differentiation and bone formation during bone development. The sequence is that of Sodium-coupled neutral amino acid symporter 2 from Bos taurus (Bovine).